The chain runs to 228 residues: Probable 26S proteasome regulatory subunit p28 (228 aa).

ANK repeat units lie at residues 1–30 (MSNY…SLLL), 35–64 (DGRI…NVNL), 71–100 (SGWT…KPDL), 106–135 (QGVT…SVRI), 139–168 (FNQI…SAVN), and 173–203 (QGWT…EYDL).

Interacts with RPT3.

Its function is as follows. Acts as a chaperone during the assembly of the 26S proteasome, specifically of the 19S regulatory complex (RC) and appears to have an overlapping role with RPN14. This chain is Probable 26S proteasome regulatory subunit p28 (NAS6), found in Saccharomyces cerevisiae (strain ATCC 204508 / S288c) (Baker's yeast).